The primary structure comprises 318 residues: 2-methyl-6-phytyl-1,4-hydroquinone methyltransferase (318 aa).

The signal sequence occupies residues 1-39; that stretch reads MPEYLLLPAGLISLSLAIAAGLYLLTARGYQSSDSVANA. The tract at residues 97 to 106 is SAM motif I; the sequence is VLDVGCGIGG. The segment at 157–165 is SAM motif II; the sequence is GSFDVVWSV. Positions 184-193 are SAM motif III; sequence VVKPGGILVV.

The protein belongs to the class I-like SAM-binding methyltransferase superfamily. gTMT family.

It catalyses the reaction 2-methyl-6-phytyl-1,4-benzene-1,4-diol + S-adenosyl-L-methionine = 2,3-dimethyl-6-phytylbenzene-1,4-diol + S-adenosyl-L-homocysteine + H(+). The enzyme catalyses 2-methyl-6-(all-trans-nonaprenyl)benzene-1,4-diol + S-adenosyl-L-methionine = plastoquinol-9 + S-adenosyl-L-homocysteine + H(+). The catalysed reaction is 6-geranylgeranyl-2-methylbenzene-1,4-diol + S-adenosyl-L-methionine = 6-geranylgeranyl-2,3-dimethylbenzene-1,4-diol + S-adenosyl-L-homocysteine + H(+). The protein operates within cofactor biosynthesis; tocopherol biosynthesis. Functionally, involved in a key methylation step in both tocopherol (vitamin E) and plastoquinone synthesis. Catalyzes the conversion of 2-methyl-6-phytyl-1,4-hydroquinol (MPBQ) to 2,3-dimethyl-6-phytyl-1,4-hydroquinol (DMPQ, a substrate for tocopherol cyclase), and 2-methyl-6-solanyl-1,4-benzoquinol (MSBQ) to plastoquinol. This is 2-methyl-6-phytyl-1,4-hydroquinone methyltransferase from Synechocystis sp. (strain ATCC 27184 / PCC 6803 / Kazusa).